Consider the following 275-residue polypeptide: Large ribosomal subunit protein uL2 (275 aa).

The interval 221-275 is disordered; sequence RGSAMTPRDHPHGGGEGKAPRGMPPKTPWGKPALGKRTRRNKKSDRFIIRRRYEA. Positions 227 to 239 are enriched in basic and acidic residues; that stretch reads PRDHPHGGGEGKA. The span at 254–263 shows a compositional bias: basic residues; sequence LGKRTRRNKK. Over residues 264–275 the composition is skewed to basic and acidic residues; the sequence is SDRFIIRRRYEA.

Belongs to the universal ribosomal protein uL2 family. In terms of assembly, part of the 50S ribosomal subunit. Forms a bridge to the 30S subunit in the 70S ribosome.

Its function is as follows. One of the primary rRNA binding proteins. Required for association of the 30S and 50S subunits to form the 70S ribosome, for tRNA binding and peptide bond formation. It has been suggested to have peptidyltransferase activity; this is somewhat controversial. Makes several contacts with the 16S rRNA in the 70S ribosome. In Thermomicrobium roseum (strain ATCC 27502 / DSM 5159 / P-2), this protein is Large ribosomal subunit protein uL2.